The following is a 470-amino-acid chain: 3-isopropylmalate dehydratase large subunit (470 aa).

3 residues coordinate [4Fe-4S] cluster: cysteine 351, cysteine 411, and cysteine 414.

It belongs to the aconitase/IPM isomerase family. LeuC type 1 subfamily. In terms of assembly, heterodimer of LeuC and LeuD. It depends on [4Fe-4S] cluster as a cofactor.

It catalyses the reaction (2R,3S)-3-isopropylmalate = (2S)-2-isopropylmalate. It functions in the pathway amino-acid biosynthesis; L-leucine biosynthesis; L-leucine from 3-methyl-2-oxobutanoate: step 2/4. Its function is as follows. Catalyzes the isomerization between 2-isopropylmalate and 3-isopropylmalate, via the formation of 2-isopropylmaleate. This Rhodopseudomonas palustris (strain BisA53) protein is 3-isopropylmalate dehydratase large subunit.